We begin with the raw amino-acid sequence, 465 residues long: Cysteine--tRNA ligase (465 aa).

Cys29 serves as a coordination point for Zn(2+). The 'HIGH' region motif lies at 31–41 (PTVYNYIHIGN). 3 residues coordinate Zn(2+): Cys209, His234, and Glu238. Positions 266–270 (KMSKS) match the 'KMSKS' region motif. Lys269 contacts ATP. Position 270 is a phosphoserine (Ser270).

It belongs to the class-I aminoacyl-tRNA synthetase family. In terms of assembly, monomer. Zn(2+) is required as a cofactor.

The protein localises to the cytoplasm. It catalyses the reaction tRNA(Cys) + L-cysteine + ATP = L-cysteinyl-tRNA(Cys) + AMP + diphosphate. This chain is Cysteine--tRNA ligase, found in Bacillus thuringiensis (strain Al Hakam).